The sequence spans 245 residues: 1-(5-phosphoribosyl)-5-[(5-phosphoribosylamino)methylideneamino] imidazole-4-carboxamide isomerase (245 aa).

The active-site Proton acceptor is aspartate 7. Catalysis depends on aspartate 129, which acts as the Proton donor.

This sequence belongs to the HisA/HisF family.

Its subcellular location is the cytoplasm. The enzyme catalyses 1-(5-phospho-beta-D-ribosyl)-5-[(5-phospho-beta-D-ribosylamino)methylideneamino]imidazole-4-carboxamide = 5-[(5-phospho-1-deoxy-D-ribulos-1-ylimino)methylamino]-1-(5-phospho-beta-D-ribosyl)imidazole-4-carboxamide. It participates in amino-acid biosynthesis; L-histidine biosynthesis; L-histidine from 5-phospho-alpha-D-ribose 1-diphosphate: step 4/9. The chain is 1-(5-phosphoribosyl)-5-[(5-phosphoribosylamino)methylideneamino] imidazole-4-carboxamide isomerase from Shewanella amazonensis (strain ATCC BAA-1098 / SB2B).